The chain runs to 59 residues: uncharacterized protein (59 aa).

A run of 2 helical transmembrane segments spans residues 1–21 (MNMY…YIFI) and 30–50 (GSWI…PYFY).

It is found in the cell membrane. This is an uncharacterized protein from Bacillus subtilis (strain 168).